The chain runs to 880 residues: Valine--tRNA ligase (880 aa).

The 'HIGH' region signature appears at 48–58 (PNITGKLHLGH). Positions 527-531 (KMSKS) match the 'KMSKS' region motif. An ATP-binding site is contributed by lysine 530. Coiled coils occupy residues 717–741 (KEEL…AIRN) and 810–880 (LFDL…KSLK).

The protein belongs to the class-I aminoacyl-tRNA synthetase family. ValS type 1 subfamily. As to quaternary structure, monomer.

The protein localises to the cytoplasm. It catalyses the reaction tRNA(Val) + L-valine + ATP = L-valyl-tRNA(Val) + AMP + diphosphate. Its function is as follows. Catalyzes the attachment of valine to tRNA(Val). As ValRS can inadvertently accommodate and process structurally similar amino acids such as threonine, to avoid such errors, it has a 'posttransfer' editing activity that hydrolyzes mischarged Thr-tRNA(Val) in a tRNA-dependent manner. The chain is Valine--tRNA ligase from Clostridium tetani (strain Massachusetts / E88).